The primary structure comprises 65 residues: Large ribosomal subunit protein bL35 (65 aa).

Belongs to the bacterial ribosomal protein bL35 family.

This chain is Large ribosomal subunit protein bL35, found in Rubrobacter xylanophilus (strain DSM 9941 / JCM 11954 / NBRC 16129 / PRD-1).